The sequence spans 1765 residues: Sodium channel protein type 11 subunit alpha (1765 aa).

Over Met-1–Ser-126 the chain is Cytoplasmic. An I repeat occupies Phe-115–Arg-406. Residues Val-127–Asn-148 traverse the membrane as a helical segment. An N-linked (GlcNAc...) asparagine glycan is attached at Asn-149. The Extracellular segment spans residues Asn-149–Asn-159. The helical transmembrane segment at Ile-160 to Ala-179 threads the bilayer. The Cytoplasmic portion of the chain corresponds to Arg-180–Arg-191. The helical transmembrane segment at Asp-192–Leu-211 threads the bilayer. Residues Gly-212–Ser-219 lie on the Extracellular side of the membrane. Asn-217 is a glycosylation site (N-linked (GlcNAc...) asparagine). Residues Thr-220–Leu-239 form a helical; Voltage-sensor membrane-spanning segment. At Lys-240 to Asp-255 the chain is on the cytoplasmic side. Residues Val-256–Leu-269 traverse the membrane as a helical segment. Residues Val-270–Ser-342 lie on the Extracellular side of the membrane. Residues Cys-283 and Cys-320 are joined by a disulfide bond. N-linked (GlcNAc...) asparagine glycans are attached at residues Asn-303, Asn-327, and Asn-336. Positions Phe-343 to Leu-367 form an intramembrane region, pore-forming. The Extracellular portion of the chain corresponds to Arg-368–Phe-374. Residues Val-375 to Ala-400 traverse the membrane as a helical segment. Topologically, residues Tyr-401–Thr-570 are cytoplasmic. The segment at Arg-470–Pro-490 is disordered. Residues Cys-557–Gln-821 form an II repeat. The helical transmembrane segment at Ile-571 to Met-594 threads the bilayer. The Extracellular portion of the chain corresponds to Glu-595 to Asp-605. Residues Ile-606–Leu-629 form a helical membrane-spanning segment. Residues Asp-630–His-637 are Cytoplasmic-facing. The helical transmembrane segment at Gly-638–Leu-659 threads the bilayer. At Ser-660–Ser-664 the chain is on the extracellular side. N-linked (GlcNAc...) asparagine glycosylation occurs at Asn-662. Residues Phe-665–Leu-684 form a helical; Voltage-sensor membrane-spanning segment. Topologically, residues Asn-685–Gly-699 are cytoplasmic. A helical membrane pass occupies residues Asn-700 to Ala-722. Residues Lys-723–Asp-742 are Extracellular-facing. Asn-725 is a glycosylation site (N-linked (GlcNAc...) asparagine). The segment at residues Phe-743–Trp-763 is an intramembrane region (pore-forming). Topologically, residues Glu-764 to Pro-773 are extracellular. A disulfide bridge connects residues Cys-765 and Cys-775. Residues Leu-774–Leu-799 traverse the membrane as a helical segment. Over Asn-800 to Gln-1030 the chain is Cytoplasmic. The tract at residues Asn-850 to Ala-869 is disordered. One copy of the III repeat lies at Asn-1023–Leu-1320. Residues Ile-1031 to Ile-1053 traverse the membrane as a helical segment. The Extracellular portion of the chain corresponds to Phe-1054 to Lys-1067. The chain crosses the membrane as a helical span at residues Leu-1068 to Phe-1093. The Cytoplasmic portion of the chain corresponds to Arg-1094–Ser-1099. A helical transmembrane segment spans residues Ala-1100–Thr-1117. Asn-1118 is a topological domain (extracellular). The chain crosses the membrane as a helical; Voltage-sensor span at residues Leu-1119–Phe-1140. The Cytoplasmic segment spans residues Glu-1141 to Asn-1159. Residues Val-1160–Gly-1181 form a helical membrane-spanning segment. Residues Lys-1182–Val-1224 are Extracellular-facing. N-linked (GlcNAc...) asparagine glycosylation is found at Asn-1188, Asn-1197, Asn-1203, and Asn-1211. The pore-forming intramembrane region spans Gly-1225–Ala-1246. At Ala-1247 to Asn-1262 the chain is on the extracellular side. Residues Leu-1263–Ile-1289 form a helical membrane-spanning segment. Residues Asp-1290–Asp-1342 are Cytoplasmic-facing. The IV repeat unit spans residues Ile-1329 to Gln-1619. The helical transmembrane segment at Leu-1343–Ala-1366 threads the bilayer. Topologically, residues Glu-1367 to Lys-1377 are extracellular. The chain crosses the membrane as a helical span at residues Ile-1378–Leu-1401. At Arg-1402–Thr-1407 the chain is on the cytoplasmic side. Residues Asn-1408–Glu-1431 form a helical membrane-spanning segment. Topologically, residues Asn-1432–Leu-1440 are extracellular. A helical; Voltage-sensor membrane pass occupies residues Phe-1441 to Arg-1463. Topologically, residues Thr-1464 to Asn-1478 are cytoplasmic. The chain crosses the membrane as a helical span at residues Ile-1479–Val-1501. The Extracellular portion of the chain corresponds to Lys-1502–Thr-1515. The segment at residues Phe-1516 to Pro-1538 is an intramembrane region (pore-forming). Topologically, residues Met-1539 to Ile-1559 are extracellular. A helical membrane pass occupies residues Ala-1560 to Leu-1584. The Cytoplasmic portion of the chain corresponds to Glu-1585–Asp-1765.

It belongs to the sodium channel (TC 1.A.1.10) family. Nav1.9/SCN11A subfamily. In terms of assembly, the voltage-resistant sodium channel consists of an ion conducting pore forming alpha-subunit regulated by one or more auxiliary subunits SCN1B, SCN2B and SCN3B. In terms of tissue distribution, expressed in the dorsal root ganglia (C-fiber neurons), spinal cord, trigeminal ganglia, testis, ovary, uterus and small intestine.

It is found in the cell membrane. It catalyses the reaction Na(+)(in) = Na(+)(out). Sodium channel mediating the voltage-dependent sodium ion permeability of excitable membranes. Assuming opened or closed conformations in response to the voltage difference across the membrane, the protein forms a sodium-selective channel through which sodium ions may pass in accordance with their electrochemical gradient. Involved in membrane depolarization during action potential in nociceptors which function as key relay stations for the electrical transmission of pain signals from the periphery to the central nervous system. Also involved in rapid BDNF-evoked neuronal depolarization. This chain is Sodium channel protein type 11 subunit alpha, found in Mus musculus (Mouse).